Here is a 378-residue protein sequence, read N- to C-terminus: Neutral protease 2 homolog ARB_04336 (378 aa).

The first 19 residues, 1–19 (MKFFTALAAVGALLAPAVA), serve as a signal peptide directing secretion. Residues 20-186 (LPTPASEASH…DYFSKGLDKR (167 aa)) constitute a propeptide that is removed on maturation. Intrachain disulfides connect cysteine 192-cysteine 262 and cysteine 269-cysteine 287. Position 311 (histidine 311) interacts with Zn(2+). The active site involves glutamate 312. Histidine 315 and aspartate 326 together coordinate Zn(2+).

Belongs to the peptidase M35 family. Requires Zn(2+) as cofactor.

Its subcellular location is the secreted. It carries out the reaction Preferential cleavage of bonds with hydrophobic residues in P1'. Also 3-Asn-|-Gln-4 and 8-Gly-|-Ser-9 bonds in insulin B chain.. Its function is as follows. Secreted metalloproteinase that allows assimilation of proteinaceous substrates. Shows high activities on basic nuclear substrates such as histone and protamine. May be involved in virulence. The chain is Neutral protease 2 homolog ARB_04336 from Arthroderma benhamiae (strain ATCC MYA-4681 / CBS 112371) (Trichophyton mentagrophytes).